A 611-amino-acid chain; its full sequence is Threonine--tRNA ligase (611 aa).

Residues 209–502 (DHRRLGKDLE…MTENYAGDFP (294 aa)) form a catalytic region. Residues cysteine 302, histidine 353, and histidine 479 each coordinate Zn(2+).

This sequence belongs to the class-II aminoacyl-tRNA synthetase family. In terms of assembly, homodimer. Requires Zn(2+) as cofactor.

It localises to the cytoplasm. The catalysed reaction is tRNA(Thr) + L-threonine + ATP = L-threonyl-tRNA(Thr) + AMP + diphosphate + H(+). In terms of biological role, catalyzes the attachment of threonine to tRNA(Thr) in a two-step reaction: L-threonine is first activated by ATP to form Thr-AMP and then transferred to the acceptor end of tRNA(Thr). Also edits incorrectly charged L-seryl-tRNA(Thr). The polypeptide is Threonine--tRNA ligase (Synechococcus sp. (strain CC9902)).